A 468-amino-acid polypeptide reads, in one-letter code: Cytochrome bd ubiquinol oxidase subunit 1 (468 aa).

Helical transmembrane passes span 15 to 35 (TLFH…VALM), 51 to 71 (AKFW…TGIL), 95 to 115 (LAIE…LWIF), 124 to 144 (IHAL…FWIL), 177 to 197 (LWVE…FFIA), 219 to 239 (LAMI…HMQA), 331 to 351 (FRIM…GLWL), 366 to 386 (IMIA…IMTE), and 416 to 436 (SIIA…FLFI). A heme b-binding site is contributed by His18. A heme b-binding site is contributed by His183. Met334 contacts heme b. The interval 448–468 (HHDVPVSTDPFSQEVYHGISS) is disordered.

It belongs to the cytochrome ubiquinol oxidase subunit 1 family. In terms of assembly, heterodimer of subunits I and II. Requires heme b as cofactor. Heme d cis-diol is required as a cofactor.

It is found in the cell membrane. It catalyses the reaction 2 a ubiquinol + O2(in) + 4 H(+)(in) = 2 a ubiquinone + 2 H2O(in) + 4 H(+)(out). The chain is Cytochrome bd ubiquinol oxidase subunit 1 (cydA) from Bacillus subtilis (strain 168).